The chain runs to 515 residues: Lysine--tRNA ligase (515 aa).

The Mg(2+) site is built by E422 and E429.

Belongs to the class-II aminoacyl-tRNA synthetase family. As to quaternary structure, homodimer. Mg(2+) serves as cofactor.

It localises to the cytoplasm. It carries out the reaction tRNA(Lys) + L-lysine + ATP = L-lysyl-tRNA(Lys) + AMP + diphosphate. The polypeptide is Lysine--tRNA ligase (Clostridium acetobutylicum (strain ATCC 824 / DSM 792 / JCM 1419 / IAM 19013 / LMG 5710 / NBRC 13948 / NRRL B-527 / VKM B-1787 / 2291 / W)).